Consider the following 269-residue polypeptide: Basic leucine zipper 19 (269 aa).

A bZIP domain is found at 140–196 (DPKRVKRILANRQSAQRSRVRKLQYISELERSVTTLQMEVSALSPRVAFLDHQRSLL). A basic motif region spans residues 142-161 (KRVKRILANRQSAQRSRVRK). The leucine-zipper stretch occupies residues 168–196 (LERSVTTLQMEVSALSPRVAFLDHQRSLL).

Expressed in roots and shoots.

The protein resides in the nucleus. Transcription regulator. The chain is Basic leucine zipper 19 (BZIP19) from Oryza sativa subsp. japonica (Rice).